The chain runs to 505 residues: Protein phosphatase 1J (505 aa).

The disordered stretch occupies residues 1-103 (MLNRVRSAVA…PPDTGRRLPW (103 aa)). Low complexity predominate over residues 27–50 (DLPNAASAPPAAAPEAPRSPPAKA). Phosphoserine is present on residues Ser66 and Ser76. The region spanning 104–498 (STGYAEVINA…DDISVFVIPL (395 aa)) is the PPM-type phosphatase domain.

The protein belongs to the PP2C family. In terms of assembly, interacts with UBE2I/UBC9.

It catalyses the reaction O-phospho-L-seryl-[protein] + H2O = L-seryl-[protein] + phosphate. The catalysed reaction is O-phospho-L-threonyl-[protein] + H2O = L-threonyl-[protein] + phosphate. In Homo sapiens (Human), this protein is Protein phosphatase 1J (PPM1J).